Here is a 193-residue protein sequence, read N- to C-terminus: Ion-translocating oxidoreductase complex subunit A (193 aa).

The next 6 membrane-spanning stretches (helical) occupy residues 5–25 (LLLF…FLGL), 39–59 (MGMG…AWLI), 63–83 (ILIP…VIAV), 102–122 (LLGI…VALL), 134–154 (ALYG…FAAI), and 171–191 (AIAL…NGLV).

This sequence belongs to the NqrDE/RnfAE family. The complex is composed of six subunits: RsxA, RsxB, RsxC, RsxD, RsxE and RsxG.

The protein localises to the cell inner membrane. Part of a membrane-bound complex that couples electron transfer with translocation of ions across the membrane. Required to maintain the reduced state of SoxR. The sequence is that of Ion-translocating oxidoreductase complex subunit A from Shigella sonnei (strain Ss046).